Reading from the N-terminus, the 178-residue chain is Protein GrpE (178 aa).

Composition is skewed to basic and acidic residues over residues 1–19 (MAKH…KEEA) and 30–42 (SPEK…ANER). Positions 1–42 (MAKHKQEEHPEDVEVKEEAVETAEQAESASPEKSELELANER) are disordered.

This sequence belongs to the GrpE family. Homodimer.

It is found in the cytoplasm. In terms of biological role, participates actively in the response to hyperosmotic and heat shock by preventing the aggregation of stress-denatured proteins, in association with DnaK and GrpE. It is the nucleotide exchange factor for DnaK and may function as a thermosensor. Unfolded proteins bind initially to DnaJ; upon interaction with the DnaJ-bound protein, DnaK hydrolyzes its bound ATP, resulting in the formation of a stable complex. GrpE releases ADP from DnaK; ATP binding to DnaK triggers the release of the substrate protein, thus completing the reaction cycle. Several rounds of ATP-dependent interactions between DnaJ, DnaK and GrpE are required for fully efficient folding. The protein is Protein GrpE of Streptococcus sanguinis (strain SK36).